The primary structure comprises 339 residues: GTP 3',8-cyclase (339 aa).

Positions 13–249 (RYGRPLRDLR…GEVAQRHAFA (237 aa)) constitute a Radical SAM core domain. Arg22 serves as a coordination point for GTP. The [4Fe-4S] cluster site is built by Cys29 and Cys33. Position 35 (Tyr35) interacts with S-adenosyl-L-methionine. Cys36 lines the [4Fe-4S] cluster pocket. Arg75 lines the GTP pocket. An S-adenosyl-L-methionine-binding site is contributed by Gly79. Thr106 contacts GTP. Position 130 (Ser130) interacts with S-adenosyl-L-methionine. Lys168 contacts GTP. Residue Met202 participates in S-adenosyl-L-methionine binding. [4Fe-4S] cluster-binding residues include Cys266 and Cys269. 271 to 273 (RAR) lines the GTP pocket. Cys283 provides a ligand contact to [4Fe-4S] cluster.

Belongs to the radical SAM superfamily. MoaA family. As to quaternary structure, monomer and homodimer. [4Fe-4S] cluster is required as a cofactor.

It carries out the reaction GTP + AH2 + S-adenosyl-L-methionine = (8S)-3',8-cyclo-7,8-dihydroguanosine 5'-triphosphate + 5'-deoxyadenosine + L-methionine + A + H(+). It participates in cofactor biosynthesis; molybdopterin biosynthesis. Its function is as follows. Catalyzes the cyclization of GTP to (8S)-3',8-cyclo-7,8-dihydroguanosine 5'-triphosphate. The sequence is that of GTP 3',8-cyclase from Xanthomonas campestris pv. campestris (strain 8004).